Here is a 101-residue protein sequence, read N- to C-terminus: DNA-binding protein Fis (101 aa).

Residues 77–96 constitute a DNA-binding region (H-T-H motif); that stretch reads QTRAANMLGINRGTLRKKLK.

This sequence belongs to the transcriptional regulatory Fis family. Homodimer.

In terms of biological role, activates ribosomal RNA transcription. Plays a direct role in upstream activation of rRNA promoters. The sequence is that of DNA-binding protein Fis from Shewanella denitrificans (strain OS217 / ATCC BAA-1090 / DSM 15013).